Consider the following 176-residue polypeptide: 2-C-methyl-D-erythritol 2,4-cyclodiphosphate synthase (176 aa).

3 residues coordinate a divalent metal cation: D23, H25, and H60. Residue 23 to 25 participates in 4-CDP-2-C-methyl-D-erythritol 2-phosphate binding; the sequence is DSH. 149–152 is a 4-CDP-2-C-methyl-D-erythritol 2-phosphate binding site; it reads TSGE.

The protein belongs to the IspF family. In terms of assembly, homotrimer. The cofactor is a divalent metal cation.

The catalysed reaction is 4-CDP-2-C-methyl-D-erythritol 2-phosphate = 2-C-methyl-D-erythritol 2,4-cyclic diphosphate + CMP. Its pathway is isoprenoid biosynthesis; isopentenyl diphosphate biosynthesis via DXP pathway; isopentenyl diphosphate from 1-deoxy-D-xylulose 5-phosphate: step 4/6. Functionally, involved in the biosynthesis of isopentenyl diphosphate (IPP) and dimethylallyl diphosphate (DMAPP), two major building blocks of isoprenoid compounds. Catalyzes the conversion of 4-diphosphocytidyl-2-C-methyl-D-erythritol 2-phosphate (CDP-ME2P) to 2-C-methyl-D-erythritol 2,4-cyclodiphosphate (ME-CPP) with a corresponding release of cytidine 5-monophosphate (CMP). The sequence is that of 2-C-methyl-D-erythritol 2,4-cyclodiphosphate synthase from Chlamydia felis (strain Fe/C-56) (Chlamydophila felis).